Here is a 1024-residue protein sequence, read N- to C-terminus: Multidrug resistance protein MdtC (1024 aa).

12 helical membrane-spanning segments follow: residues 12–32 (VATT…FSLL), 333–353 (EVER…FIFL), 360–380 (LIPA…MYLC), 387–407 (LSLM…IVVL), 435–455 (VLSM…MAGL), 469–489 (VAIG…CAWL), 528–548 (WVMV…ISIP), 853–873 (LWLI…LYES), 875–895 (VHPL…LLAL), 897–917 (LFDA…IGIV), 953–973 (PIIM…LSSG), and 984–1004 (ITIV…TPVI).

Belongs to the resistance-nodulation-cell division (RND) (TC 2.A.6) family. MdtC subfamily. Part of a tripartite efflux system composed of MdtA, MdtB and MdtC. MdtC forms a heteromultimer with MdtB.

It is found in the cell inner membrane. This Yersinia pseudotuberculosis serotype O:1b (strain IP 31758) protein is Multidrug resistance protein MdtC.